Reading from the N-terminus, the 804-residue chain is DNA mismatch repair protein MutS (804 aa).

614-621 (GPNMAGKS) is an ATP binding site.

The protein belongs to the DNA mismatch repair MutS family.

This protein is involved in the repair of mismatches in DNA. It is possible that it carries out the mismatch recognition step. This protein has a weak ATPase activity. This chain is DNA mismatch repair protein MutS, found in Ehrlichia chaffeensis (strain ATCC CRL-10679 / Arkansas).